The chain runs to 309 residues: Ribose-phosphate pyrophosphokinase (309 aa).

ATP is bound by residues aspartate 37 to glutamate 39 and arginine 96 to glutamine 97. Positions 130 and 169 each coordinate Mg(2+). Lysine 192 is an active-site residue. D-ribose 5-phosphate is bound by residues arginine 194, aspartate 218, and aspartate 222 to threonine 226.

This sequence belongs to the ribose-phosphate pyrophosphokinase family. Class I subfamily. Homohexamer. It depends on Mg(2+) as a cofactor.

The protein resides in the cytoplasm. It catalyses the reaction D-ribose 5-phosphate + ATP = 5-phospho-alpha-D-ribose 1-diphosphate + AMP + H(+). It functions in the pathway metabolic intermediate biosynthesis; 5-phospho-alpha-D-ribose 1-diphosphate biosynthesis; 5-phospho-alpha-D-ribose 1-diphosphate from D-ribose 5-phosphate (route I): step 1/1. Its function is as follows. Involved in the biosynthesis of the central metabolite phospho-alpha-D-ribosyl-1-pyrophosphate (PRPP) via the transfer of pyrophosphoryl group from ATP to 1-hydroxyl of ribose-5-phosphate (Rib-5-P). The sequence is that of Ribose-phosphate pyrophosphokinase from Campylobacter jejuni subsp. jejuni serotype O:2 (strain ATCC 700819 / NCTC 11168).